The following is an 81-amino-acid chain: MKTLLLTLVVVTIVCLDLGYTLKCNKLVPIASKTCPAGKNLCYKMFMMSDLTVPVKRGCIDVCPKSSLLVKYVCCNTDICN.

An N-terminal signal peptide occupies residues 1 to 21 (MKTLLLTLVVVTIVCLDLGYT). 4 disulfides stabilise this stretch: Cys24-Cys42, Cys35-Cys59, Cys63-Cys74, and Cys75-Cys80.

The protein belongs to the three-finger toxin family. Short-chain subfamily. Type IA cytotoxin sub-subfamily. As to quaternary structure, monomer in solution; Homodimer and oligomer in the presence of negatively charged lipids forming a pore with a size ranging between 20 and 30 Angstroms. Expressed by the venom gland.

It is found in the secreted. The protein resides in the target cell membrane. In terms of biological role, shows cytolytic activity on many different cells by forming pore in lipid membranes. In vivo, increases heart rate or kills the animal by cardiac arrest. In addition, it binds to heparin with high affinity, interacts with Kv channel-interacting protein 1 (KCNIP1) in a calcium-independent manner, and binds to integrin alpha-V/beta-3 (ITGAV/ITGB3) with moderate affinity. The polypeptide is Cytotoxin 1b (Naja atra (Chinese cobra)).